Reading from the N-terminus, the 423-residue chain is TNF receptor-associated factor family protein DDB_G0277243 (423 aa).

The segment at 20–66 adopts an RING-type; degenerate zinc-finger fold; the sequence is CSICVDPVLNSLPLEQHQALSCKNGHLLCQACWGKQLALRKECCICK. TRAF-type zinc fingers lie at residues 124-179 and 180-237; these read SHLR…NDMP and THIE…CYLS. In terms of domain architecture, MATH spans 287-411; the sequence is RYKGNWTIEN…DGKLTINIDV (125 aa).

Belongs to the TNF receptor-associated factor family. A subfamily.

The protein resides in the cytoplasm. Its function is as follows. Probable adapter protein and signal transducer that links members of the tumor necrosis factor receptor family to different signaling pathways by association with the receptor cytoplasmic domain and kinases. The sequence is that of TNF receptor-associated factor family protein DDB_G0277243 from Dictyostelium discoideum (Social amoeba).